The chain runs to 464 residues: Protein FAM90A22 (464 aa).

Disordered stretches follow at residues 1–43 (MMAR…PRLK), 70–389 (PATL…HDGA), and 415–437 (HSPEKPGAFLAQSPHVSEKSEAP). Basic and acidic residues-rich tracts occupy residues 74–89 (GKKEGKENLKPWKPRA) and 97–114 (NKDKGEKEERPRQQDPQR). The span at 182–197 (SLSPLRKTSLSSSSSL) shows a compositional bias: low complexity.

This sequence belongs to the FAM90 family.

The sequence is that of Protein FAM90A22 from Homo sapiens (Human).